A 513-amino-acid polypeptide reads, in one-letter code: GMP synthase [glutamine-hydrolyzing] (513 aa).

Positions 8 to 198 constitute a Glutamine amidotransferase type-1 domain; the sequence is MILVLDFGSQ…VFGVCDCEGK (191 aa). The Nucleophile role is filled by Cys-85. Residues His-172 and Glu-174 contribute to the active site. Residues 199–388 form the GMPS ATP-PPase domain; sequence WSMENFIEIE…LGLPDDIVWR (190 aa). An ATP-binding site is contributed by 226–232; the sequence is SGGVDSS.

In terms of assembly, homodimer.

The enzyme catalyses XMP + L-glutamine + ATP + H2O = GMP + L-glutamate + AMP + diphosphate + 2 H(+). Its pathway is purine metabolism; GMP biosynthesis; GMP from XMP (L-Gln route): step 1/1. In terms of biological role, catalyzes the synthesis of GMP from XMP. The chain is GMP synthase [glutamine-hydrolyzing] from Bacillus velezensis (strain DSM 23117 / BGSC 10A6 / LMG 26770 / FZB42) (Bacillus amyloliquefaciens subsp. plantarum).